The sequence spans 248 residues: FCS-Like Zinc finger 14 (248 aa).

Over residues 85–94 (VCRSEPNQPG) the composition is skewed to polar residues. The interval 85 to 108 (VCRSEPNQPGRSDPVQFMSHGGST) is disordered. The FLZ-type zinc finger occupies 181-224 (GFLNSCYLCRKKLHGQDIFIYRGEKAFCSTECRSSHIANDERKE).

It belongs to the FLZ family. In terms of assembly, interacts with KIN10 and KIN11 via its FLZ-type zinc finger domain. Interacts with KINB1, KINB2 and KINB3 via its N-terminal part.

The protein localises to the cytoplasm. It localises to the nucleus. Functionally, may act as an adapter to facilitate the interaction of SnRK1 complex with effector proteins, conferring tissue- and stimulus-type specific differences in the SnRK1 regulation pathway. The protein is FCS-Like Zinc finger 14 of Arabidopsis thaliana (Mouse-ear cress).